Reading from the N-terminus, the 425-residue chain is NAC domain-containing protein 10 (425 aa).

A compositionally biased stretch (polar residues) spans 1 to 10; sequence MESPDSSSGS. Positions 1 to 34 are disordered; it reads MESPDSSSGSAPPRVLRRQQQQPGSAPELPPGFR. Residues 12–23 show a composition bias toward low complexity; that stretch reads PPRVLRRQQQQP. Positions 29 to 200 constitute an NAC domain; the sequence is LPPGFRFHPT…DWVLCRIYKK (172 aa). A DNA-binding region spans residues 129-206; that stretch reads VGVKKALVFY…IYKKTNKAGA (78 aa).

As to expression, highest expression in stamens. Expressed in leaves.

The protein localises to the nucleus. Its function is as follows. Transcription factor of the NAC family associated with male fertility. Involved in anther development, but not in senescence. Reduced expression of NAC5 via RNAi leads to male-sterility. This chain is NAC domain-containing protein 10, found in Oryza sativa subsp. japonica (Rice).